The sequence spans 84 residues: MEQTKIDRINELARKKKTEGLTGAEKLEQERLREEYIEGYRRSIRHHIEGLKIVDEEGNDITPAKLKEIQRQKGIHGRKPEDNS.

The disordered stretch occupies residues 57–84 (EGNDITPAKLKEIQRQKGIHGRKPEDNS).

It belongs to the UPF0291 family.

Its subcellular location is the cytoplasm. The chain is UPF0291 protein SMU_447 from Streptococcus mutans serotype c (strain ATCC 700610 / UA159).